Here is a 1154-residue protein sequence, read N- to C-terminus: Chromosome partition protein Smc (1154 aa).

Proline 32–asparagine 39 serves as a coordination point for ATP. Coiled coils occupy residues valine 170–alanine 215, leucine 282–glutamate 505, and alanine 627–glutamate 993.

Belongs to the SMC family. In terms of assembly, homodimer.

It localises to the cytoplasm. Functionally, required for chromosome condensation and partitioning. The sequence is that of Chromosome partition protein Smc from Rhodopseudomonas palustris (strain ATCC BAA-98 / CGA009).